A 238-amino-acid polypeptide reads, in one-letter code: Peroxisomal biogenesis factor 11 (238 aa).

It belongs to the peroxin-11 family.

It is found in the mitochondrion. Its subcellular location is the peroxisome membrane. In terms of biological role, involved in peroxisomal proliferation. Promotes peroxisome division and biogenesis. The polypeptide is Peroxisomal biogenesis factor 11 (pex11) (Schizosaccharomyces pombe (strain 972 / ATCC 24843) (Fission yeast)).